Consider the following 90-residue polypeptide: Small ribosomal subunit protein uS15c (90 aa).

The protein belongs to the universal ribosomal protein uS15 family. As to quaternary structure, part of the 30S ribosomal subunit.

Its subcellular location is the plastid. The protein localises to the chloroplast. The protein is Small ribosomal subunit protein uS15c (rps15) of Dioscorea elephantipes (Elephant's foot yam).